We begin with the raw amino-acid sequence, 179 residues long: Large ribosomal subunit protein uL5 (179 aa).

The protein belongs to the universal ribosomal protein uL5 family. As to quaternary structure, part of the 50S ribosomal subunit; part of the 5S rRNA/L5/L18/L25 subcomplex. Contacts the 5S rRNA and the P site tRNA. Forms a bridge to the 30S subunit in the 70S ribosome.

Its function is as follows. This is one of the proteins that bind and probably mediate the attachment of the 5S RNA into the large ribosomal subunit, where it forms part of the central protuberance. In the 70S ribosome it contacts protein S13 of the 30S subunit (bridge B1b), connecting the 2 subunits; this bridge is implicated in subunit movement. Contacts the P site tRNA; the 5S rRNA and some of its associated proteins might help stabilize positioning of ribosome-bound tRNAs. The polypeptide is Large ribosomal subunit protein uL5 (Agathobacter rectalis (strain ATCC 33656 / DSM 3377 / JCM 17463 / KCTC 5835 / VPI 0990) (Eubacterium rectale)).